Consider the following 188-residue polypeptide: Elongation factor P (188 aa).

Belongs to the elongation factor P family.

It localises to the cytoplasm. The protein operates within protein biosynthesis; polypeptide chain elongation. Functionally, involved in peptide bond synthesis. Stimulates efficient translation and peptide-bond synthesis on native or reconstituted 70S ribosomes in vitro. Probably functions indirectly by altering the affinity of the ribosome for aminoacyl-tRNA, thus increasing their reactivity as acceptors for peptidyl transferase. This Leptospira interrogans serogroup Icterohaemorrhagiae serovar copenhageni (strain Fiocruz L1-130) protein is Elongation factor P.